The sequence spans 177 residues: Hypoxanthine phosphoribosyltransferase (177 aa).

The diphosphate site is built by arginine 43 and glycine 44. Glutamate 99 provides a ligand contact to GMP. An IMP-binding site is contributed by glutamate 99. Mg(2+)-binding residues include glutamate 99 and aspartate 100. The Proton acceptor role is filled by aspartate 103. GMP contacts are provided by residues 103 to 108 (DSGKTL), lysine 131, and aspartate 159. Residues 103-108 (DSGKTL) and lysine 131 contribute to the IMP site. Diphosphate is bound at residue arginine 165.

Belongs to the purine/pyrimidine phosphoribosyltransferase family. In terms of assembly, homotetramer. Requires Mg(2+) as cofactor.

The protein localises to the cytoplasm. It catalyses the reaction IMP + diphosphate = hypoxanthine + 5-phospho-alpha-D-ribose 1-diphosphate. It carries out the reaction GMP + diphosphate = guanine + 5-phospho-alpha-D-ribose 1-diphosphate. The protein operates within purine metabolism; IMP biosynthesis via salvage pathway; IMP from hypoxanthine: step 1/1. Functionally, purine salvage pathway enzyme which catalyzes the transfer of the ribosyl-5-phosphate group from 5-phospho-alpha-D-ribose 1-diphosphate (PRPP) to the N9 position of hypoxanthine to yield IMP (inosine 5'-monophosphate). To a lesser extent, can also act on guanine leading to GMP, but shows a highly less efficient activity with xanthine. The protein is Hypoxanthine phosphoribosyltransferase (hpt) of Buchnera aphidicola subsp. Schizaphis graminum (strain Sg).